The following is a 157-amino-acid chain: SsrA-binding protein (157 aa).

The protein belongs to the SmpB family.

The protein resides in the cytoplasm. Required for rescue of stalled ribosomes mediated by trans-translation. Binds to transfer-messenger RNA (tmRNA), required for stable association of tmRNA with ribosomes. tmRNA and SmpB together mimic tRNA shape, replacing the anticodon stem-loop with SmpB. tmRNA is encoded by the ssrA gene; the 2 termini fold to resemble tRNA(Ala) and it encodes a 'tag peptide', a short internal open reading frame. During trans-translation Ala-aminoacylated tmRNA acts like a tRNA, entering the A-site of stalled ribosomes, displacing the stalled mRNA. The ribosome then switches to translate the ORF on the tmRNA; the nascent peptide is terminated with the 'tag peptide' encoded by the tmRNA and targeted for degradation. The ribosome is freed to recommence translation, which seems to be the essential function of trans-translation. The chain is SsrA-binding protein from Syntrophomonas wolfei subsp. wolfei (strain DSM 2245B / Goettingen).